A 357-amino-acid polypeptide reads, in one-letter code: Arginine kinase (357 aa).

An N-acetylalanine modification is found at A2. The Phosphagen kinase N-terminal domain occupies 9–91; it reads KLEEGFKKLQ…FDPIIEDYHK (83 aa). Position 64–68 (64–68) interacts with L-arginine; it reads GVGVY. Residues 119–356 form the Phosphagen kinase C-terminal domain; that stretch reads FVISTRVRCG…LELIKIEKEM (238 aa). Residues 122-126 and H185 contribute to the ATP site; that span reads STRVR. E225 serves as a coordination point for L-arginine. An ATP-binding site is contributed by R229. C271 is a binding site for L-arginine. ATP-binding positions include 280–284 and 309–314; these read RASVH and RGTRGE. Position 314 (E314) interacts with L-arginine.

It belongs to the ATP:guanido phosphotransferase family.

It catalyses the reaction L-arginine + ATP = N(omega)-phospho-L-arginine + ADP + H(+). This Pachygrapsus marmoratus (Marbled rock crab) protein is Arginine kinase.